The following is a 261-amino-acid chain: Adenosylcobinamide-GDP ribazoletransferase (261 aa).

7 helical membrane-spanning segments follow: residues glycine 4–tryptophan 26, leucine 40–leucine 60, proline 62–leucine 82, valine 110–methionine 130, phenylalanine 140–isoleucine 160, cysteine 197–phenylalanine 217, and isoleucine 237–leucine 257.

It belongs to the CobS family. Mg(2+) serves as cofactor.

The protein resides in the cell membrane. The catalysed reaction is alpha-ribazole + adenosylcob(III)inamide-GDP = adenosylcob(III)alamin + GMP + H(+). The enzyme catalyses alpha-ribazole 5'-phosphate + adenosylcob(III)inamide-GDP = adenosylcob(III)alamin 5'-phosphate + GMP + H(+). It functions in the pathway cofactor biosynthesis; adenosylcobalamin biosynthesis; adenosylcobalamin from cob(II)yrinate a,c-diamide: step 7/7. In terms of biological role, joins adenosylcobinamide-GDP and alpha-ribazole to generate adenosylcobalamin (Ado-cobalamin). Also synthesizes adenosylcobalamin 5'-phosphate from adenosylcobinamide-GDP and alpha-ribazole 5'-phosphate. This chain is Adenosylcobinamide-GDP ribazoletransferase, found in Halalkalibacterium halodurans (strain ATCC BAA-125 / DSM 18197 / FERM 7344 / JCM 9153 / C-125) (Bacillus halodurans).